Reading from the N-terminus, the 465-residue chain is Asparagine--tRNA ligase (465 aa).

Belongs to the class-II aminoacyl-tRNA synthetase family. As to quaternary structure, homodimer.

The protein resides in the cytoplasm. It catalyses the reaction tRNA(Asn) + L-asparagine + ATP = L-asparaginyl-tRNA(Asn) + AMP + diphosphate + H(+). In Pseudoalteromonas translucida (strain TAC 125), this protein is Asparagine--tRNA ligase.